A 143-amino-acid polypeptide reads, in one-letter code: Large ribosomal subunit protein uL15 (143 aa).

Residues M1 to P56 are disordered. Gly residues predominate over residues R21–A31.

The protein belongs to the universal ribosomal protein uL15 family. In terms of assembly, part of the 50S ribosomal subunit.

Its function is as follows. Binds to the 23S rRNA. The polypeptide is Large ribosomal subunit protein uL15 (Delftia acidovorans (strain DSM 14801 / SPH-1)).